The following is a 616-amino-acid chain: Chaperone protein HscA (616 aa).

This sequence belongs to the heat shock protein 70 family.

Functionally, chaperone involved in the maturation of iron-sulfur cluster-containing proteins. Has a low intrinsic ATPase activity which is markedly stimulated by HscB. Involved in the maturation of IscU. This chain is Chaperone protein HscA, found in Salmonella enteritidis PT4 (strain P125109).